We begin with the raw amino-acid sequence, 178 residues long: uncharacterized protein (178 aa).

This sequence to E.coli YrdD.

This is an uncharacterized protein from Haemophilus influenzae (strain ATCC 51907 / DSM 11121 / KW20 / Rd).